The sequence spans 673 residues: DNA ligase (673 aa).

Residues 33-37 (DYEYD), 82-83 (SL), and Glu-113 contribute to the NAD(+) site. Lys-115 functions as the N6-AMP-lysine intermediate in the catalytic mechanism. Positions 136, 170, 285, and 309 each coordinate NAD(+). Residues Cys-403, Cys-406, Cys-421, and Cys-426 each coordinate Zn(2+). Residues 583 to 672 (AKSDILKGYT…SREEAEKILM (90 aa)) form the BRCT domain.

This sequence belongs to the NAD-dependent DNA ligase family. LigA subfamily. Requires Mg(2+) as cofactor. Mn(2+) serves as cofactor.

The enzyme catalyses NAD(+) + (deoxyribonucleotide)n-3'-hydroxyl + 5'-phospho-(deoxyribonucleotide)m = (deoxyribonucleotide)n+m + AMP + beta-nicotinamide D-nucleotide.. Functionally, DNA ligase that catalyzes the formation of phosphodiester linkages between 5'-phosphoryl and 3'-hydroxyl groups in double-stranded DNA using NAD as a coenzyme and as the energy source for the reaction. It is essential for DNA replication and repair of damaged DNA. The polypeptide is DNA ligase (Caldicellulosiruptor bescii (strain ATCC BAA-1888 / DSM 6725 / KCTC 15123 / Z-1320) (Anaerocellum thermophilum)).